A 383-amino-acid polypeptide reads, in one-letter code: S-adenosylmethionine synthase (383 aa).

His15 is an ATP binding site. Residue Asp17 participates in Mg(2+) binding. Glu43 is a K(+) binding site. Residues Glu56 and Gln99 each contribute to the L-methionine site. Residues 99–109 form a flexible loop region; sequence QSPDINQGVDR. ATP contacts are provided by residues 164-166, 230-231, Asp239, 245-246, Ala262, and Lys266; these read DAK, RF, and RK. Asp239 is a binding site for L-methionine. Position 270 (Lys270) interacts with L-methionine.

Belongs to the AdoMet synthase family. Homotetramer; dimer of dimers. The cofactor is Mg(2+). K(+) serves as cofactor.

Its subcellular location is the cytoplasm. It catalyses the reaction L-methionine + ATP + H2O = S-adenosyl-L-methionine + phosphate + diphosphate. It functions in the pathway amino-acid biosynthesis; S-adenosyl-L-methionine biosynthesis; S-adenosyl-L-methionine from L-methionine: step 1/1. Its function is as follows. Catalyzes the formation of S-adenosylmethionine (AdoMet) from methionine and ATP. The overall synthetic reaction is composed of two sequential steps, AdoMet formation and the subsequent tripolyphosphate hydrolysis which occurs prior to release of AdoMet from the enzyme. In Pectobacterium atrosepticum (strain SCRI 1043 / ATCC BAA-672) (Erwinia carotovora subsp. atroseptica), this protein is S-adenosylmethionine synthase.